A 429-amino-acid polypeptide reads, in one-letter code: Phosphomethylpyrimidine synthase (429 aa).

Substrate-binding positions include N66, M95, Y124, H163, 185 to 187 (SRG), 226 to 229 (DGLR), and E265. Position 269 (H269) interacts with Zn(2+). A substrate-binding site is contributed by Y292. Zn(2+) is bound at residue H333. Residues C409, C412, and C416 each coordinate [4Fe-4S] cluster.

Belongs to the ThiC family. [4Fe-4S] cluster is required as a cofactor.

The catalysed reaction is 5-amino-1-(5-phospho-beta-D-ribosyl)imidazole + S-adenosyl-L-methionine = 4-amino-2-methyl-5-(phosphooxymethyl)pyrimidine + CO + 5'-deoxyadenosine + formate + L-methionine + 3 H(+). It participates in cofactor biosynthesis; thiamine diphosphate biosynthesis. Functionally, catalyzes the synthesis of the hydroxymethylpyrimidine phosphate (HMP-P) moiety of thiamine from aminoimidazole ribotide (AIR) in a radical S-adenosyl-L-methionine (SAM)-dependent reaction. The polypeptide is Phosphomethylpyrimidine synthase (Carboxydothermus hydrogenoformans (strain ATCC BAA-161 / DSM 6008 / Z-2901)).